Reading from the N-terminus, the 255-residue chain is Type III pantothenate kinase (255 aa).

ATP is bound at residue 6–13 (DIGNTNIK). 107–110 (GADR) contributes to the substrate binding site. Catalysis depends on D109, which acts as the Proton acceptor. T132 contributes to the ATP binding site. T184 is a substrate binding site.

The protein belongs to the type III pantothenate kinase family. Homodimer. NH4(+) serves as cofactor. Requires K(+) as cofactor.

The protein localises to the cytoplasm. It catalyses the reaction (R)-pantothenate + ATP = (R)-4'-phosphopantothenate + ADP + H(+). Its pathway is cofactor biosynthesis; coenzyme A biosynthesis; CoA from (R)-pantothenate: step 1/5. Its function is as follows. Catalyzes the phosphorylation of pantothenate (Pan), the first step in CoA biosynthesis. In Roseiflexus sp. (strain RS-1), this protein is Type III pantothenate kinase.